The following is a 550-amino-acid chain: Solute carrier family 22 member 6 (550 aa).

Residues methionine 1–glutamine 9 are Cytoplasmic-facing. A helical transmembrane segment spans residues valine 10–leucine 30. Residues methionine 31–glutamine 135 are Extracellular-facing. Asparagine 39, asparagine 92, and asparagine 113 each carry an N-linked (GlcNAc...) asparagine glycan. The helical transmembrane segment at leucine 136 to alanine 156 threads the bilayer. Over aspartate 157–valine 164 the chain is Cytoplasmic. Residues leucine 165–isoleucine 187 form a helical membrane-spanning segment. The Extracellular segment spans residues tyrosine 188–serine 195. Residues glycine 196–isoleucine 216 form a helical membrane-spanning segment. At histidine 217–threonine 224 the chain is on the cytoplasmic side. The helical transmembrane segment at leucine 225–proline 245 threads the bilayer. Over histidine 246–arginine 248 the chain is Extracellular. Residues histidine 249–isoleucine 269 form a helical membrane-spanning segment. Over glutamate 270 to histidine 337 the chain is Cytoplasmic. Residues leucine 338–methionine 358 form a helical membrane-spanning segment. At aspartate 359–tyrosine 368 the chain is on the extracellular side. The chain crosses the membrane as a helical span at residues leucine 369 to isoleucine 389. The Cytoplasmic portion of the chain corresponds to asparagine 390–arginine 395. A helical transmembrane segment spans residues proline 396–proline 416. Topologically, residues glutamine 417 to serine 420 are extracellular. Residues isoleucine 421 to tyrosine 444 form a helical membrane-spanning segment. The Cytoplasmic segment spans residues threonine 445 to glutamine 455. A helical membrane pass occupies residues threonine 456–valine 475. The Extracellular portion of the chain corresponds to serine 476–serine 484. A helical transmembrane segment spans residues methionine 485–proline 505. At glutamate 506–leucine 550 the chain is on the cytoplasmic side. Residues aspartate 514 to leucine 550 are disordered.

The protein belongs to the major facilitator (TC 2.A.1) superfamily. Organic cation transporter (TC 2.A.1.19) family. Post-translationally, glycosylated. Glycosylation is necessary for proper targeting of the transporter to the plasma membrane.

It is found in the cell membrane. The enzyme catalyses prostaglandin F2alpha(out) = prostaglandin F2alpha(in). The catalysed reaction is prostaglandin E2(out) = prostaglandin E2(in). Its function is as follows. Involved in the renal elimination of endogenous and exogenous organic anions. Functions as organic anion exchanger when the uptake of one molecule of organic anion is coupled with an efflux of one molecule of endogenous dicarboxylic acid (glutarate, ketoglutarate, etc). Mediates the transport of prostaglandin E2 (PGE2) and prostaglandin F2-alpha (PGF2-alpha) and may be involved in their renal excretion. Also mediates the sodium-independent uptake of p-aminohippurate (PAH), 2,3-dimercapto-1-propanesulfonic acid (DMPS), cidofovir, adefovir, 9-(2-phosphonylmethoxyethyl) guanine (PMEG), 9-(2-phosphonylmethoxyethyl) diaminopurine (PMEDAP), ochratoxin (OTA), acyclovir (ACV), 3'-azido-3-'deoxythymidine (AZT), cimetidine (CMD), 2,4-dichloro-phenoxyacetate (2,4-D), hippurate (HA), indoleacetate (IA), indoxyl sulfate (IS) and 3-carboxy-4-methyl-5-propyl-2-furanpropionate (CMPF) and edaravone sulfate. PAH uptake is inhibited by p-chloromercuribenzenesulphonate (PCMBS), diethyl pyrocarbonate (DEPC), indomethacin, sulindac, diclofenac, carprofen, okadaic acid, benzothiazolylcysteine (BTC), S-chlorotrifluoroethylcysteine (CTFC), cysteine S-conjugates S-dichlorovinylcysteine (DCVC), furosemide, steviol, phorbol 12-myristate 13-acetate (PMA), calcium ionophore A23187, benzylpenicillin, bumetamide, losartan, probenecid, phenol red, urate, glutarate and alpha-ketoglutarate. This is Solute carrier family 22 member 6 (SLC22A6) from Pongo abelii (Sumatran orangutan).